Consider the following 619-residue polypeptide: Protein Atg16l2 (619 aa).

Residues 57–78 (LQPEPNSVTPTTHQGPWEESEL) form a disordered region. Residues 60–70 (EPNSVTPTTHQ) are compositionally biased toward polar residues. Positions 116-227 (AALGTLESEL…QARVSQELKK (112 aa)) form a coiled coil. 7 WD repeats span residues 334-373 (AHLS…LEAN), 378-417 (GAGG…SKET), 420-454 (GHKD…LGRA), 455-498 (YCSR…CTQV), 500-539 (PVQG…IRQV), 546-585 (KCGS…LESR), and 589-619 (PHCA…VLWQ).

This sequence belongs to the WD repeat ATG16 family. In terms of assembly, homooligomer. Heterooligomer with ATG16L1. Interacts with ATG5. Self-oligomerizes to form a 800-kDa complex composed of ATG12-ATG5 and ATG16L2. Interacts with RAB33B.

The protein resides in the cytoplasm. Its subcellular location is the cytosol. Its function is as follows. May play a role in regulating epithelial homeostasis in an ATG16L1-dependent manner. In Homo sapiens (Human), this protein is Protein Atg16l2 (ATG16L2).